Here is a 667-residue protein sequence, read N- to C-terminus: Probable E3 ubiquitin-protein ligase HIP1 (667 aa).

Disordered regions lie at residues 142–163 and 285–311; these read NGAS…NGQA and TTAG…RSFR. The segment covering 288-309 has biased composition (low complexity); the sequence is GLSSSSYDPSGGNNNSGGSQRS. The RING-type; atypical zinc-finger motif lies at 620–661; that stretch reads CCICQEEYVDGDDLGTLDCGHDFHVGCVRQWLVVKNTCPICK.

Belongs to the RING-type zinc finger family. Interacts with HAL3.

The catalysed reaction is S-ubiquitinyl-[E2 ubiquitin-conjugating enzyme]-L-cysteine + [acceptor protein]-L-lysine = [E2 ubiquitin-conjugating enzyme]-L-cysteine + N(6)-ubiquitinyl-[acceptor protein]-L-lysine.. It participates in protein modification; protein ubiquitination. Its function is as follows. Probable E3 ubiquitin-protein ligase that functions downstream of HAL3 and is required for HAL3-regulated plant growth. Activation of HIP1 by HAL3 may lead to the degradation of cell cycle suppressors, resulting in enhancement of cell division and plant growth. In Oryza sativa subsp. japonica (Rice), this protein is Probable E3 ubiquitin-protein ligase HIP1 (HIP1).